The primary structure comprises 1663 residues: Complement C3 (1663 aa).

An N-terminal signal peptide occupies residues 1 to 22; the sequence is MGPTSGPSLLLLLLTHLPLALG. Residues S38 and S70 each carry the phosphoserine; by FAM20C modification. A glycan (N-linked (GlcNAc...) asparagine) is linked at N85. 2 positions are modified to phosphoserine; by FAM20C: S297 and S303. 13 disulfide bridges follow: C559–C816, C627–C662, C693–C720, C694–C727, C707–C728, C873–C1513, C1101–C1158, C1358–C1489, C1389–C1458, C1506–C1511, C1518–C1590, C1537–C1661, and C1637–C1646. S672 is modified (phosphoserine; by FAM20C). One can recognise an Anaphylatoxin-like domain in the interval 693–728; the sequence is CCEDGMRENPMRFSCQRRTRFISLGEACKKVFLDCC. N939 is a glycosylation site (N-linked (GlcNAc...) asparagine). Residues 954-973 form a disordered region; the sequence is REGVQKEDIPPADLSDQVPD. S968 is modified (phosphoserine; by FAM20C). Residues 1010–1013 constitute a cross-link (isoglutamyl cysteine thioester (Cys-Gln)); it reads CGEQ. At S1321 the chain carries Phosphoserine; by FAM20C. The NTR domain occupies 1518 to 1661; the sequence is CFIQKSDDKV…FTESMVVFGC (144 aa). Residue S1573 is modified to Phosphoserine; by FAM20C. The N-linked (GlcNAc...) asparagine glycan is linked to N1617. An interaction with CFP/properdin region spans residues 1634-1659; sequence EDECQDEENQKQCQDLGAFTESMVVF.

In terms of assembly, in absence of complement activation, the C3 precursor is first processed by the removal of 4 Arg residues, forming two chains, beta and alpha, linked by a disulfide bond. As to quaternary structure, complement C3b is composed of complement C3b and complement C3 beta chains that are associated via disulfide bonds. Non-enzymatic component of the C5 convertase, also named C4bC2bC3b, composed of the serine protease complement C2b (C2), complement C3b, as well as complement C4b (C4). Non-enzymatic component of the C5 convertase of the alternative complement pathways composed of the serine protease complement CFB and complement C3b. Interacts with CFP; interaction takes place together with CFB in the alternative complement system and allows the complex to become active. Interacts with CR1 (via Sushi 8 and Sushi 9 domains). Interacts with CFH. Interacts with CFH. Interacts with CR2. In terms of assembly, during pregnancy, C3dg exists as a complex (probably a 2:2:2 heterohexamer) with AGT and the proform of PRG2. Interacts with CR2 (via the N-terminal Sushi domains 1 and 2). As to quaternary structure, (Microbial infection) C3b interacts with herpes simplex virus 1 (HHV-1) and herpes simplex virus 2 (HHV-2) envelope glycoprotein C; this interaction inhibits the activation of the complement system. (Microbial infection) Interacts with Staphylococcus aureus immunoglobulin-binding protein Sbi; this interaction prevents the association between C3dg and CR2. In terms of assembly, (Microbial infection) Interacts with Staphylococcus aureus protein Fib. C3 precursor is first processed by the removal of 4 Arg residues, forming two chains, beta and alpha, linked by a disulfide bond. During activation of the complement systems, the alpha chain is cleaved into C3a and C3b by the C3 convertase: C3b stays linked to the beta chain, while C3a is released in the plasma. The alpha chain is cleaved by the serine protease complement C2b component of the C3 convertase to generate C3a and C3b following activation by the classical, lectin and GZMK complement systems. The alpha chain is cleaved by CFB component of the C3 convertase to generate C3a and C3b following activation by the alternative complement system. Post-translationally, C3a is further processed by carboxypeptidases to release the C-terminal arginine residue generating the acylation stimulating protein (ASP). Levels of ASP are increased in adipocytes in the postprandial period and by insulin and dietary chylomicrons. In terms of processing, complement C3b is rapidly split in two positions by factor I (CFI) and a cofactor (CFH) to form iC3b (inactivated C3b) and C3f which is released. CFI and CFH catalyze proteolytic degradation of already-deposited complement C3b. Then iC3b is slowly cleaved (possibly by CFI) to form C3c (beta chain + alpha' chain fragment 1 + alpha' chain fragment 2), C3dg and C3f. Other proteases produce other fragments such as C3d or C3g. Upon activation, the internal thioester bond reacts with carbohydrate antigens on the target surface to form amide or ester bonds, leading to covalent association with the surface of pathogens. Post-translationally, complement C3b interacts with complement C4b via a thioester linkage. In terms of processing, phosphorylated by FAM20C in the extracellular medium. (Microbial infection) C3 is cleaved by Staphylococcus aureus aureolysin; this cleavage renders C3a and C3b inactive. C3b is rapidly degraded by host factors CFH and CFI preventing its deposition on the bacterial surface while C3a is further inactivated by aureolysin. Post-translationally, (Microbial infection) Complement C3 beta chain is cleaved and inactivated by S.pyogenes SpeB. In terms of processing, (Microbial infection) Cleaved by N.meningitidis NalP between Leu-744 and Gly-745, generating a slightly shorter C3 alpha form and a slightly longer C3 beta form. The C3b-like fragment is degraded in the presence of the complement regulators CFH and CFI, preventing its deposition on the bacterial surface. Plasma. In terms of tissue distribution, produced in adipocytes and released into the plasma during both the fasting and postprandial periods.

The protein resides in the secreted. The protein localises to the cell surface. Its activity is regulated as follows. Complement activation is inhibited by VSIG4. Its function is as follows. Precursor of non-enzymatic components of the classical, alternative, lectin and GZMK complement pathways, which consist in a cascade of proteins that leads to phagocytosis and breakdown of pathogens and signaling that strengthens the adaptive immune system. Functionally, non-enzymatic component of C5 convertase. Generated following cleavage by C3 convertase, it covalently attaches to the surface of pathogens, where it acts as an opsonin that marks the surface of antigens for removal. Complement C3b binds covalently via its reactive thioester, to cell surface carbohydrates or immune aggregates. Together with complement C4b, it then recruits the serine protease complement C2b to form the C5 convertase, which cleaves and activate C5, the next component of the complement pathways. In the alternative complement pathway, recruits the serine protease CFB to form the C5 convertase that cleaves and activates C5. Mediator of local inflammatory process released following cleavage by C3 convertase. Acts by binding to its receptor, C3AR1, activating G protein-coupled receptor signaling, promoting the phosphorylation, ARRB2-mediated internalization and endocytosis of C3AR1. C3a anaphylatoxin stimulates the activation of immune cells such as mast cells and basophilic leukocytes to release inflammation agents, such as cytokines, chemokines and histamine, which promote inflammation development. Also acts as potent chemoattractant for the migration of macrophages and neutrophils to the inflamed tissues, resulting in neutralization of the inflammatory triggers by multiple ways, such as phagocytosis and generation of reactive oxidants. In terms of biological role, adipogenic hormone that stimulates triglyceride synthesis and glucose transport in adipocytes, regulating fat storage and playing a role in postprandial triglyceride clearance. Appears to stimulate triglyceride synthesis via activation of the PLC, MAPK and AKT signaling pathways. Acts by binding to its receptor, C5AR2, activating G protein-coupled receptor signaling, promoting the phosphorylation, ARRB2-mediated internalization and endocytosis of C5AR2. Its function is as follows. Acts as a chemoattractant for neutrophils in chronic inflammation. The polypeptide is Complement C3 (Homo sapiens (Human)).